We begin with the raw amino-acid sequence, 554 residues long: Dihydroxy-acid dehydratase (554 aa).

Position 78 (aspartate 78) interacts with Mg(2+). A [2Fe-2S] cluster-binding site is contributed by cysteine 119. Mg(2+) contacts are provided by aspartate 120 and lysine 121. Lysine 121 is modified (N6-carboxylysine). Residue cysteine 192 participates in [2Fe-2S] cluster binding. Glutamate 443 is a Mg(2+) binding site. Serine 469 serves as the catalytic Proton acceptor.

The protein belongs to the IlvD/Edd family. In terms of assembly, homodimer. [2Fe-2S] cluster is required as a cofactor. It depends on Mg(2+) as a cofactor.

The enzyme catalyses (2R)-2,3-dihydroxy-3-methylbutanoate = 3-methyl-2-oxobutanoate + H2O. It catalyses the reaction (2R,3R)-2,3-dihydroxy-3-methylpentanoate = (S)-3-methyl-2-oxopentanoate + H2O. It functions in the pathway amino-acid biosynthesis; L-isoleucine biosynthesis; L-isoleucine from 2-oxobutanoate: step 3/4. It participates in amino-acid biosynthesis; L-valine biosynthesis; L-valine from pyruvate: step 3/4. In terms of biological role, functions in the biosynthesis of branched-chain amino acids. Catalyzes the dehydration of (2R,3R)-2,3-dihydroxy-3-methylpentanoate (2,3-dihydroxy-3-methylvalerate) into 2-oxo-3-methylpentanoate (2-oxo-3-methylvalerate) and of (2R)-2,3-dihydroxy-3-methylbutanoate (2,3-dihydroxyisovalerate) into 2-oxo-3-methylbutanoate (2-oxoisovalerate), the penultimate precursor to L-isoleucine and L-valine, respectively. This Clostridium novyi (strain NT) protein is Dihydroxy-acid dehydratase.